We begin with the raw amino-acid sequence, 332 residues long: UDP-3-O-acylglucosamine N-acyltransferase (332 aa).

Catalysis depends on histidine 235, which acts as the Proton acceptor.

The protein belongs to the transferase hexapeptide repeat family. LpxD subfamily. In terms of assembly, homotrimer.

The catalysed reaction is a UDP-3-O-[(3R)-3-hydroxyacyl]-alpha-D-glucosamine + a (3R)-hydroxyacyl-[ACP] = a UDP-2-N,3-O-bis[(3R)-3-hydroxyacyl]-alpha-D-glucosamine + holo-[ACP] + H(+). The protein operates within bacterial outer membrane biogenesis; LPS lipid A biosynthesis. Catalyzes the N-acylation of UDP-3-O-acylglucosamine using 3-hydroxyacyl-ACP as the acyl donor. Is involved in the biosynthesis of lipid A, a phosphorylated glycolipid that anchors the lipopolysaccharide to the outer membrane of the cell. This Fusobacterium nucleatum subsp. nucleatum (strain ATCC 25586 / DSM 15643 / BCRC 10681 / CIP 101130 / JCM 8532 / KCTC 2640 / LMG 13131 / VPI 4355) protein is UDP-3-O-acylglucosamine N-acyltransferase.